The following is a 90-amino-acid chain: U7-theraphotoxin-Hhn1h (90 aa).

A signal peptide spans 1 to 19; the sequence is MKTAIFTVVLALAVFAVLS. Residues 20 to 50 constitute a propeptide that is removed on maturation; sequence FGWEANEKALSEEFTELIHEKEAASETEARE. Cystine bridges form between Cys-51-Cys-65, Cys-58-Cys-70, and Cys-64-Cys-81.

It belongs to the neurotoxin 10 (Hwtx-1) family. 13 (Hntx-13) subfamily. As to expression, expressed by the venom gland.

It localises to the secreted. Ion channel inhibitor. This Cyriopagopus hainanus (Chinese bird spider) protein is U7-theraphotoxin-Hhn1h.